Consider the following 582-residue polypeptide: Zinc finger protein 319 (582 aa).

Positions 1-14 (MSESWQQPPQTQPQ) are enriched in low complexity. The segment at 1-39 (MSESWQQPPQTQPQQPQPPQPQHHAEPPPALAEHTLPPG) is disordered. A C2H2-type 1 zinc finger spans residues 76–100 (PKCGVCGHDLAHLSSPHEHQCLAGH). Residues 104 to 126 (FQCTQCLKIFHQATDLLEHQCVQ) form a C2H2-type 2; degenerate zinc finger. Lys130 is covalently cross-linked (Glycyl lysine isopeptide (Lys-Gly) (interchain with G-Cter in SUMO2)). Residues 132 to 154 (FVCGVCKMGFSLLTSLAQHHSSH) form a C2H2-type 3 zinc finger. The segment covering 174–196 (EPATTAAPSLPAAPAPSTVTPAE) has biased composition (low complexity). The segment at 174 to 198 (EPATTAAPSLPAAPAPSTVTPAEQA) is disordered. C2H2-type zinc fingers lie at residues 202-224 (YSCPICQKPFKHLSELSRHERIH), 230-252 (YKCTLCDKSFSQSSHLVHHKRTH), and 258-280 (YKCAVCEKTFKHRSHLVRHMYAH). Ser281 carries the phosphoserine modification. The C2H2-type 7; degenerate zinc finger occupies 287-309 (FRCNVCELHFKESSELLQHPCTP). 3 consecutive C2H2-type zinc fingers follow at residues 315 to 337 (FRCGECQKAFKRPSDLRQHERTH), 343 to 365 (FKCDLCPMGFKQQYALMRHRRTH), and 371 to 393 (FKCGLCEKGFGQPSHLLYHQHVH). The C2H2-type 11; degenerate zinc-finger motif lies at 399–421 (FKCPVCQKGFDQSAELLRHKCLP). The segment at 428 to 450 (FKCPVCNKAYKRASALQKHQLAH) adopts a C2H2-type 12 zinc-finger fold. The segment at 458–480 (LRCTLCERRFFSSSEFVQHRCDP) adopts a C2H2-type 13; degenerate zinc-finger fold. 3 consecutive C2H2-type zinc fingers follow at residues 486 to 508 (LKCPDCEKRFKYASDLQRHRRVH), 514 to 536 (YKCPNCDKAFKQREHLNKHQGVH), and 542 to 564 (FKCVWCGERFLDVALLQEHSAQH).

Belongs to the krueppel C2H2-type zinc-finger protein family.

The protein localises to the nucleus. Functionally, may be involved in transcriptional regulation. This is Zinc finger protein 319 (ZNF319) from Homo sapiens (Human).